Here is a 470-residue protein sequence, read N- to C-terminus: MSRLGALGGSRAGLGLLLGTAAGLGFLCVLYSQRWKRTQRHGRSHSLPNSLDYAQASERGRQVTQFRAIPGEAGDAAILPSLSQEGQEKVLDRLDFVLTSLMALRREVEELQRSLQGLAGEIVGEVRSHIEENQRVARRRRFPFARERSDSTGSSSVYFTASSGAALTDAESEGGYTTANAESDYERDSDKESGDAEDEVSCETVRMGRKDSLDLDVEAASSPAAAALEEDDSSGREDVQLVLLQADELHQGSKQDKREGFQLLLNNKLAYGSRQDFLWRLARAYSDMSDLTEEESGKKSYALNGKEEAEAALKKGDESAACHLWYAVLCGQLAEHEGISKRIQSGFSFKEHVDKAIELQPEDPRGHFLLGRWCYQVSHLNWLEKKTATALFESPLSATVQDALQSFLKAEELQPGFSKAGRVYISKCYRELGKNSEARKWMKLAQELPDVTNEDSAFQKDLEELEVILG.

Topologically, residues 1 to 12 are mitochondrial intermembrane; it reads MSRLGALGGSRA. The chain crosses the membrane as a helical span at residues 13-35; it reads GLGLLLGTAAGLGFLCVLYSQRW. At 36-470 the chain is on the cytoplasmic side; sequence KRTQRHGRSH…DLEELEVILG (435 aa). Phosphoserine occurs at positions 44, 46, 50, and 57. Residues 91–125 are a coiled coil; sequence LDRLDFVLTSLMALRREVEELQRSLQGLAGEIVGE. The FFAT motif lies at 157-163; sequence VYFTASS. A Phosphothreonine modification is found at threonine 160. Residues 168–205 form a disordered region; the sequence is TDAESEGGYTTANAESDYERDSDKESGDAEDEVSCETV. Serine 183, serine 193, serine 212, and serine 233 each carry phosphoserine. The span at 184–194 shows a compositional bias: basic and acidic residues; sequence DYERDSDKESG.

It belongs to the RMDN family. Interacts with PTPN2. Interacts with microtubules. Interacts with VAPB. Interacts (via FFAT motif) with MOSPD2 (via MSP domain). Interacts (via phosphorylated FFAT motif) with MOSPD2, VAPA and VAPB. In terms of processing, phosphorylation at Thr-160 of the FFAT motif activates interaction with MOSPD2, VAPA and VAPB.

It is found in the mitochondrion outer membrane. The protein localises to the cytoplasm. The protein resides in the nucleus. Its subcellular location is the cytoskeleton. It localises to the spindle. It is found in the spindle pole. Involved in cellular calcium homeostasis regulation. May participate in differentiation and apoptosis of keratinocytes. Overexpression induces apoptosis. The chain is Regulator of microtubule dynamics protein 3 from Mus musculus (Mouse).